A 285-amino-acid chain; its full sequence is Sulfotransferase 2A2 (285 aa).

3'-phosphoadenylyl sulfate-binding residues include K44, S45, G46, T47, N48, and W49. H99 functions as the Proton acceptor in the catalytic mechanism. 3'-phosphoadenylyl sulfate-binding residues include R121, S129, Y184, S218, M223, R247, K248, and G249.

The protein belongs to the sulfotransferase 1 family.

The protein localises to the cytoplasm. The catalysed reaction is an alcohol + 3'-phosphoadenylyl sulfate = an alkyl sulfate + adenosine 3',5'-bisphosphate + H(+). Functionally, sulfotransferase that utilizes 3'-phospho-5'-adenylyl sulfate (PAPS) as sulfonate donor to catalyze the sulfate conjugation of a potential wide variety of acceptor molecules bearing a hydroxyl group. Sulfonation increases the water solubility of most compounds, and therefore their renal excretion, but it can also result in bioactivation to form active metabolites. This is Sulfotransferase 2A2 from Mus musculus (Mouse).